Consider the following 193-residue polypeptide: 3-isopropylmalate dehydratase small subunit (193 aa).

The protein belongs to the LeuD family. LeuD type 1 subfamily. Heterodimer of LeuC and LeuD.

It carries out the reaction (2R,3S)-3-isopropylmalate = (2S)-2-isopropylmalate. Its pathway is amino-acid biosynthesis; L-leucine biosynthesis; L-leucine from 3-methyl-2-oxobutanoate: step 2/4. In terms of biological role, catalyzes the isomerization between 2-isopropylmalate and 3-isopropylmalate, via the formation of 2-isopropylmaleate. The protein is 3-isopropylmalate dehydratase small subunit of Listeria innocua serovar 6a (strain ATCC BAA-680 / CLIP 11262).